Reading from the N-terminus, the 241-residue chain is LexA repressor (241 aa).

Positions 26–46 form a DNA-binding region, H-T-H motif; sequence FDEMKTALDLRSKSGIHRLIT. Residues Ser-162 and Lys-200 each act as for autocatalytic cleavage activity in the active site.

This sequence belongs to the peptidase S24 family. In terms of assembly, homodimer.

The catalysed reaction is Hydrolysis of Ala-|-Gly bond in repressor LexA.. Functionally, represses a number of genes involved in the response to DNA damage (SOS response), including recA and lexA. In the presence of single-stranded DNA, RecA interacts with LexA causing an autocatalytic cleavage which disrupts the DNA-binding part of LexA, leading to derepression of the SOS regulon and eventually DNA repair. The chain is LexA repressor from Ruegeria sp. (strain TM1040) (Silicibacter sp.).